A 507-amino-acid polypeptide reads, in one-letter code: Cobyric acid synthase (507 aa).

One can recognise a GATase cobBQ-type domain in the interval 251–448; sequence DIDIAVVHLP…LHGLFDSDAF (198 aa). Cys332 functions as the Nucleophile in the catalytic mechanism. The active site involves His440.

It belongs to the CobB/CobQ family. CobQ subfamily.

Its pathway is cofactor biosynthesis; adenosylcobalamin biosynthesis. Its function is as follows. Catalyzes amidations at positions B, D, E, and G on adenosylcobyrinic A,C-diamide. NH(2) groups are provided by glutamine, and one molecule of ATP is hydrogenolyzed for each amidation. The protein is Cobyric acid synthase of Klebsiella pneumoniae (strain 342).